Reading from the N-terminus, the 754-residue chain is Disintegrin and metalloproteinase domain-containing protein 32 (754 aa).

Residues 1–22 (MLGAMLHTLLLLLLAELGALLA) form the signal peptide. Phosphoserine is present on S23. The propeptide occupies 23–176 (SGPESQSSFL…TNYGILINKK (154 aa)). N-linked (GlcNAc...) asparagine glycosylation is present at N126. The Extracellular segment spans residues 177–689 (PKSPFKNLFP…ERASKNQEKK (513 aa)). The 198-residue stretch at 187 to 384 (LYLEMSIVVD…EGAKCLQNKP (198 aa)) folds into the Peptidase M12B domain. Intrachain disulfides connect C296–C379, C338–C363, C340–C345, and C454–C475. Residues N362, N469, N570, and N571 are each glycosylated (N-linked (GlcNAc...) asparagine). The region spanning 391-483 (AAVCGNGKVE…NCPPDVTINN (93 aa)) is the Disintegrin domain. The region spanning 628 to 660 (QSKTCSSKCHGNGVCNSHGVCHCNAGYSPPNCQ) is the EGF-like domain. Cystine bridges form between C632–C642, C636–C648, and C650–C659. The helical transmembrane segment at 690–710 (WLLSLYIVLIILASVFLIGTG) threads the bilayer. The Cytoplasmic segment spans residues 711-754 (WKGLKQCGSKEEESMSSESKSEDSTYTYVSRSTSETSSMTSTSS). Over residues 720-733 (KEEESMSSESKSED) the composition is skewed to basic and acidic residues. Positions 720–754 (KEEESMSSESKSEDSTYTYVSRSTSETSSMTSTSS) are disordered. Positions 734–754 (STYTYVSRSTSETSSMTSTSS) are enriched in low complexity.

In terms of tissue distribution, expressed in sperm (at protein level). Highly expressed in the testis and weakly expressed in the epididymis, brain and heart.

It localises to the membrane. Functionally, may play a role in sperm development and fertilization This is a non-catalytic metalloprotease-like protein. In Mus musculus (Mouse), this protein is Disintegrin and metalloproteinase domain-containing protein 32.